Consider the following 305-residue polypeptide: Aspartate carbamoyltransferase catalytic subunit (305 aa).

Carbamoyl phosphate-binding residues include arginine 56 and threonine 57. An L-aspartate-binding site is contributed by lysine 85. Positions 106, 134, and 137 each coordinate carbamoyl phosphate. L-aspartate is bound by residues arginine 167 and arginine 227. Carbamoyl phosphate contacts are provided by leucine 266 and proline 267.

This sequence belongs to the aspartate/ornithine carbamoyltransferase superfamily. ATCase family. In terms of assembly, heterooligomer of catalytic and regulatory chains.

It catalyses the reaction carbamoyl phosphate + L-aspartate = N-carbamoyl-L-aspartate + phosphate + H(+). Its pathway is pyrimidine metabolism; UMP biosynthesis via de novo pathway; (S)-dihydroorotate from bicarbonate: step 2/3. Catalyzes the condensation of carbamoyl phosphate and aspartate to form carbamoyl aspartate and inorganic phosphate, the committed step in the de novo pyrimidine nucleotide biosynthesis pathway. The protein is Aspartate carbamoyltransferase catalytic subunit of Thermoplasma acidophilum (strain ATCC 25905 / DSM 1728 / JCM 9062 / NBRC 15155 / AMRC-C165).